The primary structure comprises 617 residues: Erythritol-mannosyl-transferase 1 (617 aa).

Disordered stretches follow at residues Arg365–Arg396 and Arg567–Pro617. Residues Gly371–Ala381 show a composition bias toward polar residues. Over residues Lys386 to Arg396 the composition is skewed to basic and acidic residues. Residues Thr578–Ser603 are compositionally biased toward polar residues.

The protein belongs to the UDP-glycosyltransferase family.

It participates in secondary metabolite biosynthesis. Glycosyltransferase; part of the gene cluster that mediates the biosynthesis of mannosylerythritol lipids (MELs), surface-active substances that enhance the availability of water-insoluble substrates. Depending on the number of acetyl groups, mannosylerythritol lipids can be differentiated into MEL A (fully acetylated), MEL B and MEL C (monoacetylated at R-6 and R-4, respectively), and the fully deacetylated MEL D. The first step in the pathway is the generation of mannosylerythritol by the glycosyltransferase EMT1 which catalyzes the transfer of GDP-mannose to the C-4 atom of meso-erythritol. This reaction has to be stereospecific, since only mannosyl-D-erythritol is generated. The produced disaccharide is subsequently acylated with fatty acids of various lengths by the acyltransferases MAC1 and MAC2 at positions C-2 and C-3, repectively. The existence of MEL derivatives which carry an acetyl group at C-2 implies that at least MAC1 also accepts acetyl-CoA as a donor. The final step of MEL biosynthesis is the acetylation of the fully acylated mannosylerythritol lipids catalyzed by the acetyl-CoA-dependent acetyltransferase MAT1. MAT1 displays a relaxed regioselectivity and is able to transfer acetylgroups to both positions C-4 and C-6 of the mannosyl moiety. The polypeptide is Erythritol-mannosyl-transferase 1 (Pseudozyma antarctica (strain T-34) (Yeast)).